The chain runs to 265 residues: MSIVSLLNIDVLNNPAPFGSPYEFQITFECLEPLKHDLEWKLTYVGSSTSFEHDQELDSLLVGPVPVGVNKFVFTADPPTVDLIPASELVSVTVIILSCSYNDREFVRVGYYVNNEYDSEELRLNPPPKVQVDHVVRNILAEKPRVTRFNIVWDNEGEQGEEFPPEQPDADLEDDEEEYGAGEEEEEVEEEVEGETEADAKEDIEAEGEAEAEGDGDGDGDGEDEDLEEASDEEMEVVDDEVGEESEGEDDKEDKDDKDDKKDDK.

Composition is skewed to acidic residues over residues 155–197 (NEGE…GETE) and 204–257 (IEAE…DKDD). The interval 155 to 265 (NEGEQGEEFP…DDKDDKKDDK (111 aa)) is disordered.

Belongs to the ASF1 family. Interacts with histone H3 and histone H4.

Its subcellular location is the nucleus. Functionally, histone chaperone that facilitates histone deposition and histone exchange and removal during nucleosome assembly and disassembly. The polypeptide is Histone chaperone ASF1 (ASF1) (Yarrowia lipolytica (strain CLIB 122 / E 150) (Yeast)).